A 366-amino-acid chain; its full sequence is tRNA/tmRNA (uracil-C(5))-methyltransferase (366 aa).

The S-adenosyl-L-methionine site is built by Q190, Y218, N223, E239, and D299. Residue C324 is the Nucleophile of the active site. E358 functions as the Proton acceptor in the catalytic mechanism.

It belongs to the class I-like SAM-binding methyltransferase superfamily. RNA M5U methyltransferase family. TrmA subfamily.

It catalyses the reaction uridine(54) in tRNA + S-adenosyl-L-methionine = 5-methyluridine(54) in tRNA + S-adenosyl-L-homocysteine + H(+). The catalysed reaction is uridine(341) in tmRNA + S-adenosyl-L-methionine = 5-methyluridine(341) in tmRNA + S-adenosyl-L-homocysteine + H(+). Functionally, dual-specificity methyltransferase that catalyzes the formation of 5-methyluridine at position 54 (m5U54) in all tRNAs, and that of position 341 (m5U341) in tmRNA (transfer-mRNA). The protein is tRNA/tmRNA (uracil-C(5))-methyltransferase of Escherichia coli O7:K1 (strain IAI39 / ExPEC).